Here is a 358-residue protein sequence, read N- to C-terminus: Peptide chain release factor 1 (358 aa).

The residue at position 233 (Q233) is an N5-methylglutamine.

The protein belongs to the prokaryotic/mitochondrial release factor family. Post-translationally, methylated by PrmC. Methylation increases the termination efficiency of RF1.

The protein resides in the cytoplasm. Peptide chain release factor 1 directs the termination of translation in response to the peptide chain termination codons UAG and UAA. This Listeria innocua serovar 6a (strain ATCC BAA-680 / CLIP 11262) protein is Peptide chain release factor 1.